Consider the following 149-residue polypeptide: Putative mediator of RNA polymerase II transcription subunit 22 (149 aa).

It belongs to the Mediator complex subunit 22 family. Component of the Mediator complex.

The protein localises to the nucleus. In terms of biological role, component of the Mediator complex, a coactivator involved in the regulated transcription of nearly all RNA polymerase II-dependent genes. Mediator functions as a bridge to convey information from gene-specific regulatory proteins to the basal RNA polymerase II transcription machinery. Mediator is recruited to promoters by direct interactions with regulatory proteins and serves as a scaffold for the assembly of a functional preinitiation complex with RNA polymerase II and the general transcription factors. The sequence is that of Putative mediator of RNA polymerase II transcription subunit 22 (med22) from Dictyostelium discoideum (Social amoeba).